The primary structure comprises 286 residues: NH(3)-dependent NAD(+) synthetase (286 aa).

51-58 provides a ligand contact to ATP; the sequence is GISGGVDS. Asp57 contributes to the Mg(2+) binding site. Arg148 serves as a coordination point for deamido-NAD(+). Thr168 contributes to the ATP binding site. Glu173 serves as a coordination point for Mg(2+). Residues Lys181 and Asp188 each contribute to the deamido-NAD(+) site. ATP-binding residues include Lys197 and Thr219. Position 268-269 (268-269) interacts with deamido-NAD(+); the sequence is HK.

Belongs to the NAD synthetase family. Homodimer.

It catalyses the reaction deamido-NAD(+) + NH4(+) + ATP = AMP + diphosphate + NAD(+) + H(+). It functions in the pathway cofactor biosynthesis; NAD(+) biosynthesis; NAD(+) from deamido-NAD(+) (ammonia route): step 1/1. Functionally, catalyzes the ATP-dependent amidation of deamido-NAD to form NAD. Uses ammonia as a nitrogen source. This chain is NH(3)-dependent NAD(+) synthetase, found in Paraburkholderia phytofirmans (strain DSM 17436 / LMG 22146 / PsJN) (Burkholderia phytofirmans).